The sequence spans 307 residues: Protoheme IX farnesyltransferase (307 aa).

A run of 8 helical transmembrane segments spans residues 38-58 (NTLT…LSVL), 65-85 (FFTI…NNYI), 108-128 (PGFA…FLLL), 131-151 (PMAV…YSLW), 158-178 (LNTV…WAAI), 186-206 (IAWM…LALA), 251-271 (LGIT…VLGF), and 287-307 (FVYS…VTFF).

Belongs to the UbiA prenyltransferase family. Protoheme IX farnesyltransferase subfamily. In terms of assembly, interacts with CtaA.

It localises to the cell membrane. It carries out the reaction heme b + (2E,6E)-farnesyl diphosphate + H2O = Fe(II)-heme o + diphosphate. Its pathway is porphyrin-containing compound metabolism; heme O biosynthesis; heme O from protoheme: step 1/1. Its function is as follows. Converts heme B (protoheme IX) to heme O by substitution of the vinyl group on carbon 2 of heme B porphyrin ring with a hydroxyethyl farnesyl side group. The sequence is that of Protoheme IX farnesyltransferase from Bacillus thuringiensis (strain Al Hakam).